A 901-amino-acid chain; its full sequence is HTH-type transcriptional regulator MalT (901 aa).

Ser-39–Thr-46 provides a ligand contact to ATP. An HTH luxR-type domain is found at Glu-829–Leu-894. The H-T-H motif DNA-binding region spans Asn-853–Arg-872.

Belongs to the MalT family. Monomer in solution. Oligomerizes to an active state in the presence of the positive effectors ATP and maltotriose.

With respect to regulation, activated by ATP and maltotriose, which are both required for DNA binding. Functionally, positively regulates the transcription of the maltose regulon whose gene products are responsible for uptake and catabolism of malto-oligosaccharides. Specifically binds to the promoter region of its target genes, recognizing a short DNA motif called the MalT box. The sequence is that of HTH-type transcriptional regulator MalT from Shigella sonnei (strain Ss046).